The chain runs to 118 residues: Myotrophin (118 aa).

ANK repeat units lie at residues 1-30 (MGDK…DVNR), 34-65 (GGRK…NAAD), and 67-98 (HGIT…NVKG).

It belongs to the myotrophin family.

It localises to the cytoplasm. Its subcellular location is the nucleus. It is found in the perinuclear region. Regulates NF-kappa-B transcription factor activity. Promotes growth of cardiomyocytes, but not cardiomyocyte proliferation. Promotes cardiac muscle hypertrophy. Plays a role in the regulation of the growth of actin filaments. Inhibits the activity of the F-actin-capping protein complex. The polypeptide is Myotrophin (mtpn) (Xenopus laevis (African clawed frog)).